We begin with the raw amino-acid sequence, 614 residues long: Phosphomethylpyrimidine synthase (614 aa).

Residues Asn226, Met255, Tyr284, His320, 340–342 (SRG), 381–384 (DGLR), and Glu420 contribute to the substrate site. Residue His424 coordinates Zn(2+). Substrate is bound at residue Tyr447. His488 is a Zn(2+) binding site. Residues Cys568, Cys571, and Cys576 each contribute to the [4Fe-4S] cluster site.

Belongs to the ThiC family. As to quaternary structure, homodimer. [4Fe-4S] cluster serves as cofactor.

It catalyses the reaction 5-amino-1-(5-phospho-beta-D-ribosyl)imidazole + S-adenosyl-L-methionine = 4-amino-2-methyl-5-(phosphooxymethyl)pyrimidine + CO + 5'-deoxyadenosine + formate + L-methionine + 3 H(+). It functions in the pathway cofactor biosynthesis; thiamine diphosphate biosynthesis. Catalyzes the synthesis of the hydroxymethylpyrimidine phosphate (HMP-P) moiety of thiamine from aminoimidazole ribotide (AIR) in a radical S-adenosyl-L-methionine (SAM)-dependent reaction. This chain is Phosphomethylpyrimidine synthase, found in Acidovorax sp. (strain JS42).